A 965-amino-acid chain; its full sequence is Collagenase ColQ1 (965 aa).

The N-terminal stretch at 1–30 (MNKKSKINKVMLSISTMALSLGALQAPASA) is a signal peptide. Positions 31-93 (EEKVPYNVLK…KAAVKQVKES (63 aa)) are excised as a propeptide. The tract at residues 94–366 (YSMADLNKMN…AVEQITTNYN (273 aa)) is activator domain. An S1 metalloprotease domain region spans residues 94 to 765 (YSMADLNKMN…VFHGIAKDDG (672 aa)). A catalytic subdomain region spans residues 376–645 (DLEKIRKEGK…MQQLIDNQDK (270 aa)). Position 501 (His-501) interacts with Zn(2+). Glu-502 is a catalytic residue. Residues His-505 and Glu-533 each contribute to the Zn(2+) site. Residues 653–765 (DDYLAEHAPK…VFHGIAKDDG (113 aa)) are helper subdomain. A PKD domain is found at 769-850 (APTVNINGPY…ESKSETTVTV (82 aa)). Residues 842–867 (SKSETTVTVKDGSLTESEPNNRPEEA) are disordered. The span at 845-859 (ETTVTVKDGSLTESE) shows a compositional bias: polar residues. Positions 853-965 (GSLTESEPNN…GDGTYKLSVK (113 aa)) are collagen-binding domain.

This sequence belongs to the peptidase M9B family. Collagenase subfamily. Requires Ca(2+) as cofactor. Zn(2+) is required as a cofactor.

It is found in the secreted. The catalysed reaction is Digestion of native collagen in the triple helical region at Xaa-|-Gly bonds. With synthetic peptides, a preference is shown for Gly at P3 and P1', Pro and Ala at P2 and P2', and hydroxyproline, Ala or Arg at P3'.. With respect to regulation, strongly inhibited by EDTA. Not inhibited by E-64 and PMSF, broad-spectrum cysteine and serine protease inhibitors. Acts as a true collagenase, which is highly active and cleaves natively folded collagen. In vitro, can also cleave gelatin and the synthetic peptide FALGPA (furylacryloyl-Leu-Gly-Pro-Ala). Causes damage on dermal collagen (COL), resulting in gaps in the tissue, which might lead to an accelerated bacterial infiltration and penetration into deeper sites of the host. The polypeptide is Collagenase ColQ1 (Bacillus cereus (strain Q1)).